The following is a 264-amino-acid chain: Indole-3-glycerol phosphate synthase (264 aa).

The protein belongs to the TrpC family.

It catalyses the reaction 1-(2-carboxyphenylamino)-1-deoxy-D-ribulose 5-phosphate + H(+) = (1S,2R)-1-C-(indol-3-yl)glycerol 3-phosphate + CO2 + H2O. Its pathway is amino-acid biosynthesis; L-tryptophan biosynthesis; L-tryptophan from chorismate: step 4/5. The sequence is that of Indole-3-glycerol phosphate synthase from Rhizorhabdus wittichii (strain DSM 6014 / CCUG 31198 / JCM 15750 / NBRC 105917 / EY 4224 / RW1) (Sphingomonas wittichii).